The primary structure comprises 1589 residues: Mediator of RNA polymerase II transcription subunit 23 (1589 aa).

Positions 1381–1499 are disordered; that stretch reads YVSQNEPAPP…PPTPAPMHHQ (119 aa). Basic and acidic residues predominate over residues 1392 to 1410; the sequence is TPEREKTPERKDQQKEQQE. Low complexity predominate over residues 1457–1470; the sequence is LHHQQQQQQHLSQM.

The protein belongs to the Mediator complex subunit 23 family. As to quaternary structure, component of the Mediator complex.

It is found in the nucleus. Its function is as follows. Component of the Mediator complex, a coactivator involved in the regulated transcription of nearly all RNA polymerase II-dependent genes. Mediator functions as a bridge to convey information from gene-specific regulatory proteins to the basal RNA polymerase II transcription machinery. Mediator is recruited to promoters by direct interactions with regulatory proteins and serves as a scaffold for the assembly of a functional preinitiation complex with RNA polymerase II and the general transcription factors. The polypeptide is Mediator of RNA polymerase II transcription subunit 23 (sur-2) (Caenorhabditis briggsae).